A 534-amino-acid polypeptide reads, in one-letter code: MGLRVNVSAIFMAVLLTLQTPTGQIHWGNLSKIGVVGIGSASYKVMTRSSHQSLVIKLMPNTTLLNNCTRVEIAEYRRLLRTVLEPIRDALNAMTQNIRPVQIVASSRRHKRFAGVVLAGAALGVATAAQITAGIALHQSMLNSQAIDNLRASLETTNQAIEAIRQTGQEMILAVQGVQDYINNELIPSMNQLSCDLIGQKLGLKLLRYYTEILSLFGPSLRDPISAEISIQALSYVLGGDINKVLEKLGYSGGDLLGILESRGIKARITHVDTESYFIVLSIAYPTLSEIKGVIVHRLEGVSYNIGSQEWYTTVPKYVATQGYLISNFDESSCTFMPEGTVCSQNALYPMSPLLQECLRGSTKSCARTLVSGSFGNRFILSQGNLIANCASILCKCYTTGTIINQDPDKILTHIAADHCPVVEVNGVTIQVGSRRYPDAVYLHRIDLGPPISLERLDVGTSLGSAIAKLEDAKELLESSDQILRSMKGLSSTSIVYILIAVCLGGLIGIPALICCCRGRCNKRENKLVCQDQA.

The N-terminal stretch at 1–23 (MGLRVNVSAIFMAVLLTLQTPTG) is a signal peptide. Topologically, residues 24–487 (QIHWGNLSKI…ESSDQILRSM (464 aa)) are extracellular. N-linked (GlcNAc...) asparagine; by host glycans are attached at residues Asn-29, Asn-61, and Asn-67. The tract at residues 69-95 (TRVEIAEYRRLLRTVLEPIRDALNAMT) is HRC. A fusion peptide region spans residues 113–138 (FAGVVLAGAALGVATAAQITAGIALH). Residues 138 to 166 (HQSMLNSQAIDNLRASLETTNQAIEAIRQ) are a coiled coil. Residues 139–215 (QSMLNSQAID…LLRYYTEILS (77 aa)) form an HRA region. Disulfide bonds link Cys-334–Cys-343, Cys-358–Cys-366, Cys-390–Cys-395, and Cys-397–Cys-420. Residues 367-444 (ARTLVSGSFG…RRYPDAVYLH (78 aa)) are interaction with hemagglutinin. Positions 445 to 494 (RIDLGPPISLERLDVGTSLGSAIAKLEDAKELLESSDQILRSMKGLSSTS) are HRB. The stretch at 462–487 (SLGSAIAKLEDAKELLESSDQILRSM) forms a coiled coil. Residues 488 to 518 (KGLSSTSIVYILIAVCLGGLIGIPALICCCR) traverse the membrane as a helical segment. Residues 519 to 534 (GRCNKRENKLVCQDQA) lie on the Cytoplasmic side of the membrane.

The protein belongs to the paramyxoviruses fusion glycoprotein family. Homotrimer of disulfide-linked F1-F2. Post-translationally, the inactive precursor F0 is glycosylated and proteolytically cleaved into F1 and F2 to be functionally active. The cleavage is mediated by host furin during the transport and maturation of the polypeptide.

It localises to the virion membrane. It is found in the host cell membrane. Class I viral fusion protein. Under the current model, the protein has at least 3 conformational states: pre-fusion native state, pre-hairpin intermediate state, and post-fusion hairpin state. During viral and plasma cell membrane fusion, the heptad repeat (HR) regions assume a trimer-of-hairpins structure, positioning the fusion peptide in close proximity to the C-terminal region of the ectodomain. The formation of this structure appears to drive apposition and subsequent fusion of viral and plasma cell membranes. Directs fusion of viral and cellular membranes leading to delivery of the nucleocapsid into the cytoplasm. This fusion is pH independent and occurs directly at the outer cell membrane. During viral entry or virus-mediated fusion between infected cells and neighboring susceptible cells, the head domain of the H protein initially binds to its receptor and then the stalk region of the H protein transmits the fusion-triggering signal to the F protein. Upon HN binding to its cellular receptor, the hydrophobic fusion peptide is unmasked and interacts with the cellular membrane, inducing the fusion between cell and virion membranes. Later in infection, F proteins expressed at the plasma membrane of infected cells could mediate fusion with adjacent cells to form syncytia, a cytopathic effect that could lead to tissue necrosis. In terms of biological role, some hyperfusogenic isolates can induce membrane fusion in SLAM- and nectin-4-negative cells and are linked to fatal subacute sclerosing panencephalitis (SSPE) or measles inclusion body encephalitis (MIBE). The neuropathogenicity is closely associated with enhanced propagation mediated by cell-to-cell fusion in the brain, which is principally regulated by hyperfusogenic mutations of the viral F protein. Cell-to-cell transmission of the virus also occurs with hyperfusogenic isolates. This chain is Fusion glycoprotein F0 (F), found in Measles virus (strain Yamagata-1) (MeV).